Here is a 147-residue protein sequence, read N- to C-terminus: 3-dehydroquinate dehydratase (147 aa).

Y23 serves as the catalytic Proton acceptor. Residues N74, H80, and D87 each coordinate substrate. H100 (proton donor) is an active-site residue. Residues 101-102 and R111 each bind substrate; that span reads LS.

This sequence belongs to the type-II 3-dehydroquinase family. As to quaternary structure, homododecamer.

It carries out the reaction 3-dehydroquinate = 3-dehydroshikimate + H2O. It participates in metabolic intermediate biosynthesis; chorismate biosynthesis; chorismate from D-erythrose 4-phosphate and phosphoenolpyruvate: step 3/7. Its function is as follows. Catalyzes a trans-dehydration via an enolate intermediate. The protein is 3-dehydroquinate dehydratase of Clostridium botulinum (strain 657 / Type Ba4).